A 367-amino-acid chain; its full sequence is Aminomethyltransferase (367 aa).

The protein belongs to the GcvT family. In terms of assembly, the glycine cleavage system is composed of four proteins: P, T, L and H.

It carries out the reaction N(6)-[(R)-S(8)-aminomethyldihydrolipoyl]-L-lysyl-[protein] + (6S)-5,6,7,8-tetrahydrofolate = N(6)-[(R)-dihydrolipoyl]-L-lysyl-[protein] + (6R)-5,10-methylene-5,6,7,8-tetrahydrofolate + NH4(+). In terms of biological role, the glycine cleavage system catalyzes the degradation of glycine. The chain is Aminomethyltransferase from Mycobacterium bovis (strain ATCC BAA-935 / AF2122/97).